Reading from the N-terminus, the 867-residue chain is DNA endonuclease RBBP8 (867 aa).

Residues 25-48 form an essential for binding to the MRN complex and for RPA focus formation on DNA damage region; the sequence is ELWSKLKECHDKELQELLLKINKL. Coiled coils occupy residues 38–87 and 120–141; these read LQEL…EDRL and ITEL…SEQL. Disordered regions lie at residues 141–171 and 448–486; these read LHNM…PDSP and RYGK…HSML. Positions 154–166 are enriched in acidic residues; that stretch reads ENPADTGEGEDGV. Residues 489 to 493 carry the PXDLS motif motif; it reads PLDLS. The damage-recruitment motif stretch occupies residues 508 to 531; the sequence is SSRGRTKQTFALVPEKPDPKKPLH. Phosphothreonine occurs at positions 817 and 829. The segment at 843-867 is disordered; the sequence is SPCQRPRRRQPYNAKFSSKIKEQKT.

The protein belongs to the COM1/SAE2/CtIP family. In terms of assembly, homotetramer; formed by antiparallel association of helical extensions protruding from the N-termini of two parallel coiled-coil dimers. Interacts with the MRN complex; the interaction links DNA sensing to resection. Interacts with samhd1. Phosphorylation at Thr-817 and Thr-829 promote interaction with nbn and recruitment to double-strand breaks (DSBs).

It localises to the nucleus. The protein resides in the chromosome. In terms of biological role, endonuclease that cooperates with the MRE11-RAD50-NBN (MRN) complex in DNA-end resection, the first step of double-strand break (DSB) repair through the homologous recombination (HR) pathway. Functions downstream of the MRN complex and ATM, promotes ATR activation and its recruitment to DSBs in the S/G2 phase facilitating the generation of ssDNA. Specifically promotes the endonuclease activity of the MRN complex to clear DNA ends containing protein adducts: recruited to DSBs by nbn following phosphorylation, and promotes the endonuclease of mre11 to clear protein-DNA adducts and generate clean double-strand break ends. The chain is DNA endonuclease RBBP8 (rbbp8) from Xenopus tropicalis (Western clawed frog).